We begin with the raw amino-acid sequence, 871 residues long: Synaptonemal complex protein 1 (871 aa).

Positions 1–40 (MQKLGFPAMKSLDKPRSLSGSANMYSFSNRKPPDSVSSGS) are disordered. The span at 18-40 (LSGSANMYSFSNRKPPDSVSSGS) shows a compositional bias: polar residues. Coiled-coil stretches lie at residues 58-304 (MRTD…DKKN) and 331-608 (LALD…EESK). Disordered stretches follow at residues 708 to 741 (VMSDNPPEEQEVNSNKNYSISKDSRLGGSKRSEH) and 778 to 871 (SVLS…YAFD). Residues 719–728 (VNSNKNYSIS) are compositionally biased toward polar residues. Residues 729 to 741 (KDSRLGGSKRSEH) are compositionally biased toward basic and acidic residues. Polar residues predominate over residues 831 to 847 (LTPQSIAKGTGMTSHAR).

The protein localises to the nucleus. Its function is as follows. Required for chromosome synapsis and normal fidelity of crossing over. This Arabidopsis thaliana (Mouse-ear cress) protein is Synaptonemal complex protein 1 (ZYP1A).